Here is a 428-residue protein sequence, read N- to C-terminus: MSKSLQAIRGMNDILPEQTPAWRYLESTLVSLLDGYGYKEIRLPIVEYTELFARGIGEGTDVVDKEMYTFLDRNEESLTLRPEGTAGCVRAVLEHGLAGGGQVQKLWYAGPMFRYEKPQKGRYRQFHQVGVEAFNLPGPDVDAELIVLTWRLWKKLGLADAVTLQLNSLGSSEARAAYRDALVAYLQERFDQLDEDSQRRLTTNPLRILDSKNEATQAVLVGAPTLGDYLDEESRLHFEGVKARLDAAGIRYQINHKLVRGLDYYNRTVFEWVTDKLGAQGTVCAGGRYDGLVAQLGGKATPGVGFAMGVERLVLLLETLDLLPAELNRAADVYVCAFGEAAELAALTLTERLRDELPGLRLLLNSGGGSFKSQFKKADKSGARYALILGDDELAGRVVGCKPLRDDSEQQSVAWDALAEHLAACQQA.

Belongs to the class-II aminoacyl-tRNA synthetase family. As to quaternary structure, homodimer.

It is found in the cytoplasm. It carries out the reaction tRNA(His) + L-histidine + ATP = L-histidyl-tRNA(His) + AMP + diphosphate + H(+). The chain is Histidine--tRNA ligase from Ectopseudomonas mendocina (strain ymp) (Pseudomonas mendocina).